Reading from the N-terminus, the 258-residue chain is UDP-N-acetylenolpyruvoylglucosamine reductase (258 aa).

The active site involves arginine 142. Serine 184 (proton donor) is an active-site residue. Glutamate 254 is a catalytic residue.

Belongs to the MurB family. FAD serves as cofactor.

It localises to the cytoplasm. It carries out the reaction UDP-N-acetyl-alpha-D-muramate + NADP(+) = UDP-N-acetyl-3-O-(1-carboxyvinyl)-alpha-D-glucosamine + NADPH + H(+). It functions in the pathway cell wall biogenesis; peptidoglycan biosynthesis. Functionally, cell wall formation. The sequence is that of UDP-N-acetylenolpyruvoylglucosamine reductase from Campylobacter jejuni subsp. jejuni serotype O:2 (strain ATCC 700819 / NCTC 11168).